The following is a 328-amino-acid chain: Beta-ketoacyl-[acyl-carrier-protein] synthase III (328 aa).

Active-site residues include cysteine 122 and histidine 255. The ACP-binding stretch occupies residues 256–260 (QANIR). The active site involves asparagine 285.

Belongs to the thiolase-like superfamily. FabH family. As to quaternary structure, homodimer.

It is found in the cytoplasm. The catalysed reaction is malonyl-[ACP] + acetyl-CoA + H(+) = 3-oxobutanoyl-[ACP] + CO2 + CoA. It participates in lipid metabolism; fatty acid biosynthesis. Functionally, catalyzes the condensation reaction of fatty acid synthesis by the addition to an acyl acceptor of two carbons from malonyl-ACP. Catalyzes the first condensation reaction which initiates fatty acid synthesis and may therefore play a role in governing the total rate of fatty acid production. Possesses both acetoacetyl-ACP synthase and acetyl transacylase activities. Its substrate specificity determines the biosynthesis of branched-chain and/or straight-chain of fatty acids. The protein is Beta-ketoacyl-[acyl-carrier-protein] synthase III of Herminiimonas arsenicoxydans.